The chain runs to 159 residues: uncharacterized protein (159 aa).

The span at 1-13 (MESRPSGRQHASE) shows a compositional bias: basic and acidic residues. The disordered stretch occupies residues 1–35 (MESRPSGRQHASEGDGDQSPTQCAGMRSSGRSDQP).

This is an uncharacterized protein from Homo sapiens (Human).